The primary structure comprises 158 residues: SsrA-binding protein (158 aa).

It belongs to the SmpB family.

Its subcellular location is the cytoplasm. Functionally, required for rescue of stalled ribosomes mediated by trans-translation. Binds to transfer-messenger RNA (tmRNA), required for stable association of tmRNA with ribosomes. tmRNA and SmpB together mimic tRNA shape, replacing the anticodon stem-loop with SmpB. tmRNA is encoded by the ssrA gene; the 2 termini fold to resemble tRNA(Ala) and it encodes a 'tag peptide', a short internal open reading frame. During trans-translation Ala-aminoacylated tmRNA acts like a tRNA, entering the A-site of stalled ribosomes, displacing the stalled mRNA. The ribosome then switches to translate the ORF on the tmRNA; the nascent peptide is terminated with the 'tag peptide' encoded by the tmRNA and targeted for degradation. The ribosome is freed to recommence translation, which seems to be the essential function of trans-translation. This chain is SsrA-binding protein, found in Saccharopolyspora erythraea (strain ATCC 11635 / DSM 40517 / JCM 4748 / NBRC 13426 / NCIMB 8594 / NRRL 2338).